Here is a 341-residue protein sequence, read N- to C-terminus: HTH-type transcriptional repressor PurR (341 aa).

An HTH lacI-type domain is found at 2 to 56 (ATIKDVAKRAGVSTTTVSHVINKTRFVAEETKAAVGAAIKELHYSPSAVARSLKV). Residues 4 to 23 (IKDVAKRAGVSTTTVSHVIN) constitute a DNA-binding region (H-T-H motif). Residues 48-56 (SAVARSLKV) mediate DNA binding. Hypoxanthine contacts are provided by tyrosine 73, arginine 190, threonine 192, phenylalanine 221, and aspartate 275.

Homodimer.

The protein operates within purine metabolism; purine nucleotide biosynthesis [regulation]. Its function is as follows. Is the main repressor of the genes involved in the de novo synthesis of purine nucleotides, regulating purB, purC, purEK, purF, purHD, purL, purMN and guaBA expression. PurR is allosterically activated to bind its cognate DNA by binding the purine corepressors, hypoxanthine or guanine, thereby effecting transcription repression. The protein is HTH-type transcriptional repressor PurR of Serratia proteamaculans (strain 568).